We begin with the raw amino-acid sequence, 453 residues long: Gamma-aminobutyric acid receptor subunit alpha-6 (453 aa).

An N-terminal signal peptide occupies residues 1–19 (MASSLPWLCIILWLENALG). The Extracellular segment spans residues 20–243 (KLEVEGNFYS…FHLQRKMGYF (224 aa)). A glycan (N-linked (GlcNAc...) asparagine) is linked at Asn31. A 4-aminobutanoate-binding site is contributed by Arg84. Asn128 and Asn141 each carry an N-linked (GlcNAc...) asparagine glycan. A 4-aminobutanoate-binding site is contributed by Thr147. Cys156 and Cys170 are disulfide-bonded. Residues 244–264 (MIQIYTPCIMTVILSQVSFWI) traverse the membrane as a helical segment. Over 265–270 (NKESVP) the chain is Cytoplasmic. The helical transmembrane segment at 271–290 (ARTVFGITTVLTMTTLSISA) threads the bilayer. The Extracellular segment spans residues 291 to 304 (RHSLPKVSYATAMD). The helical transmembrane segment at 305 to 325 (WFIAVCFAFVFSALIEFAAVN) threads the bilayer. Residues 326 to 422 (YFTNLQTQKA…GTSKIDQYSR (97 aa)) lie on the Cytoplasmic side of the membrane. Thr403 carries the post-translational modification Phosphothreonine. The chain crosses the membrane as a helical span at residues 423 to 443 (ILFPVAFAGFNLVYWVVYLSK). Topologically, residues 444 to 453 (DTMEVSSSVE) are extracellular.

Belongs to the ligand-gated ion channel (TC 1.A.9) family. Gamma-aminobutyric acid receptor (TC 1.A.9.5) subfamily. GABRA6 sub-subfamily. In terms of assembly, heteropentamer, formed by a combination of alpha (GABRA1-6), beta (GABRB1-3), gamma (GABRG1-3), delta (GABRD), epsilon (GABRE), rho (GABRR1-3), pi (GABRP) and theta (GABRQ) chains, each subunit exhibiting distinct physiological and pharmacological properties. Binds UBQLN1. In terms of tissue distribution, expressed in brain, in cerebellar granule cells.

It localises to the postsynaptic cell membrane. The protein localises to the cell membrane. It catalyses the reaction chloride(in) = chloride(out). Its function is as follows. Alpha subunit of the heteropentameric ligand-gated chloride channel gated by gamma-aminobutyric acid (GABA), a major inhibitory neurotransmitter in the brain. GABA-gated chloride channels, also named GABA(A) receptors (GABAAR), consist of five subunits arranged around a central pore and contain GABA active binding site(s) located at the alpha and beta subunit interface(s). When activated by GABA, GABAARs selectively allow the flow of chloride anions across the cell membrane down their electrochemical gradient. Alpha-6/GABRA6 subunits are found at both synaptic and extrasynaptic sites. Chloride influx into the postsynaptic neuron following GABAAR opening decreases the neuron ability to generate a new action potential, thereby reducing nerve transmission. Extrasynaptic alpha-6-containing receptors contribute to the tonic GABAergic inhibition. Alpha-6 subunits are also present on glutamatergic synapses. This chain is Gamma-aminobutyric acid receptor subunit alpha-6, found in Homo sapiens (Human).